Reading from the N-terminus, the 52-residue chain is Large ribosomal subunit protein bL32c (52 aa).

It belongs to the bacterial ribosomal protein bL32 family.

The protein localises to the plastid. Its subcellular location is the chloroplast. In Arabis hirsuta (Hairy rock-cress), this protein is Large ribosomal subunit protein bL32c.